The chain runs to 245 residues: Outer membrane protein assembly factor BamD (245 aa).

An N-terminal signal peptide occupies residues 1–19 (MTRMKYLVAAATLSLFLAG). Residue Cys20 is the site of N-palmitoyl cysteine attachment. Cys20 carries the S-diacylglycerol cysteine lipid modification.

The protein belongs to the BamD family. Part of the Bam complex, which is composed of the outer membrane protein BamA, and four lipoproteins BamB, BamC, BamD and BamE.

The protein resides in the cell outer membrane. Functionally, part of the outer membrane protein assembly complex, which is involved in assembly and insertion of beta-barrel proteins into the outer membrane. Constitutes, with BamA, the core component of the assembly machinery. The chain is Outer membrane protein assembly factor BamD from Escherichia coli O157:H7.